Consider the following 214-residue polypeptide: Adenylate kinase (214 aa).

Position 10–15 (10–15 (GAGKGT)) interacts with ATP. Positions 30–59 (STGDMLRAAVKAGSELGLKAKEIMDAGKLV) are NMP. Residues T31, R36, 57–59 (KLV), 85–88 (GFPR), and Q92 contribute to the AMP site. Residues 122-159 (GRRVHAASGRVYHVKFNPPKVEDKDDVTGEELTIRKDD) form an LID region. Residues R123 and 132-133 (VY) each bind ATP. AMP contacts are provided by R156 and R167. R200 contacts ATP.

This sequence belongs to the adenylate kinase family. In terms of assembly, monomer.

The protein resides in the cytoplasm. It catalyses the reaction AMP + ATP = 2 ADP. The protein operates within purine metabolism; AMP biosynthesis via salvage pathway; AMP from ADP: step 1/1. Functionally, catalyzes the reversible transfer of the terminal phosphate group between ATP and AMP. Plays an important role in cellular energy homeostasis and in adenine nucleotide metabolism. The chain is Adenylate kinase from Yersinia pseudotuberculosis serotype O:1b (strain IP 31758).